The sequence spans 345 residues: GTPase Obg (345 aa).

The 159-residue stretch at 1–159 (MRFIDEASIT…FHLKLELKLL (159 aa)) folds into the Obg domain. One can recognise an OBG-type G domain in the interval 160 to 329 (ADVGIVGLPN…LIQILARQIA (170 aa)). GTP is bound by residues 166–173 (GLPNAGKS), 191–195 (FTTLT), 213–216 (DIPG), 283–286 (NKID), and 310–312 (SAA). 2 residues coordinate Mg(2+): Ser-173 and Thr-193.

This sequence belongs to the TRAFAC class OBG-HflX-like GTPase superfamily. OBG GTPase family. As to quaternary structure, monomer. Mg(2+) is required as a cofactor.

Its subcellular location is the cytoplasm. In terms of biological role, an essential GTPase which binds GTP, GDP and possibly (p)ppGpp with moderate affinity, with high nucleotide exchange rates and a fairly low GTP hydrolysis rate. Plays a role in control of the cell cycle, stress response, ribosome biogenesis and in those bacteria that undergo differentiation, in morphogenesis control. In Desulforapulum autotrophicum (strain ATCC 43914 / DSM 3382 / VKM B-1955 / HRM2) (Desulfobacterium autotrophicum), this protein is GTPase Obg.